Here is a 288-residue protein sequence, read N- to C-terminus: MKMKAYAKINIALDAIGKREDNYHLLRMIMQTVDLYDVIDIEKSNDSNISISCNKHYVPTDERNLGYKAAVLFRDEFNIKNGVKISIKKNIPVAAGMAGGSTNAAAVLVIMNKLFNVNASLEVLKEIGLKIGADVPYCIEGGTALCEGIGEIITPLKPFENKILVVLKPNFGVSTKEVYTNLDINKIRKHVNIEGLIQAMENDDLDYVSKNMKNVLENVTLKKHTILKNIKEDMRKSGALGAMMSGSGPTVFAFFDDMLTAQRAFEFLKGKYKYSDVYITRTINSNNL.

The active site involves lysine 8. 92 to 102 (PVAAGMAGGST) contributes to the ATP binding site. The active site involves aspartate 134.

The protein belongs to the GHMP kinase family. IspE subfamily.

It carries out the reaction 4-CDP-2-C-methyl-D-erythritol + ATP = 4-CDP-2-C-methyl-D-erythritol 2-phosphate + ADP + H(+). The protein operates within isoprenoid biosynthesis; isopentenyl diphosphate biosynthesis via DXP pathway; isopentenyl diphosphate from 1-deoxy-D-xylulose 5-phosphate: step 3/6. In terms of biological role, catalyzes the phosphorylation of the position 2 hydroxy group of 4-diphosphocytidyl-2C-methyl-D-erythritol. The sequence is that of 4-diphosphocytidyl-2-C-methyl-D-erythritol kinase from Clostridium perfringens (strain SM101 / Type A).